Reading from the N-terminus, the 185-residue chain is Elongation factor P (185 aa).

This sequence belongs to the elongation factor P family.

The protein resides in the cytoplasm. It functions in the pathway protein biosynthesis; polypeptide chain elongation. Its function is as follows. Involved in peptide bond synthesis. Stimulates efficient translation and peptide-bond synthesis on native or reconstituted 70S ribosomes in vitro. Probably functions indirectly by altering the affinity of the ribosome for aminoacyl-tRNA, thus increasing their reactivity as acceptors for peptidyl transferase. This is Elongation factor P from Clostridium botulinum (strain ATCC 19397 / Type A).